The following is a 266-amino-acid chain: Flavin-dependent thymidylate synthase (266 aa).

The 212-residue stretch at glycine 11–histidine 222 folds into the ThyX domain. FAD-binding positions include serine 57, arginine 80–arginine 82, and glutamate 88. DUMP is bound by residues glutamine 77–arginine 80, glutamate 88–arginine 92, and arginine 161. The ThyX motif signature appears at arginine 80–serine 90. FAD-binding positions include aspartate 177 to histidine 179 and histidine 183. Arginine 188 lines the dUMP pocket. Arginine 188 (involved in ionization of N3 of dUMP, leading to its activation) is an active-site residue.

The protein belongs to the thymidylate synthase ThyX family. As to quaternary structure, homotetramer. The cofactor is FAD.

It carries out the reaction dUMP + (6R)-5,10-methylene-5,6,7,8-tetrahydrofolate + NADPH + H(+) = dTMP + (6S)-5,6,7,8-tetrahydrofolate + NADP(+). The protein operates within pyrimidine metabolism; dTTP biosynthesis. In terms of biological role, catalyzes the reductive methylation of 2'-deoxyuridine-5'-monophosphate (dUMP) to 2'-deoxythymidine-5'-monophosphate (dTMP) while utilizing 5,10-methylenetetrahydrofolate (mTHF) as the methyl donor, and NADPH and FADH(2) as the reductant. The chain is Flavin-dependent thymidylate synthase from Treponema denticola (strain ATCC 35405 / DSM 14222 / CIP 103919 / JCM 8153 / KCTC 15104).